The chain runs to 436 residues: GTPase Der (436 aa).

EngA-type G domains follow at residues 4–167 and 175–351; these read PTIA…PNTS and IKFS…MNQN. GTP is bound by residues 10–17, 57–61, 119–122, 181–188, 229–233, and 294–297; these read GRPNVGKS, DTGGI, NKVD, DTAGM, and NKWD. A KH-like domain is found at 352–436; that stretch reads LRIPSALLND…PIKIIPRRRK (85 aa).

It belongs to the TRAFAC class TrmE-Era-EngA-EngB-Septin-like GTPase superfamily. EngA (Der) GTPase family. In terms of assembly, associates with the 50S ribosomal subunit.

GTPase that plays an essential role in the late steps of ribosome biogenesis. The sequence is that of GTPase Der from Enterococcus faecalis (strain ATCC 700802 / V583).